The sequence spans 715 residues: Polyribonucleotide nucleotidyltransferase (715 aa).

Positions 500 and 506 each coordinate Mg(2+). The KH domain maps to 567–634 (PKVKMIRINP…AYIESLVREA (68 aa)). The S1 motif domain occupies 637–712 (GELYEAKVTR…ERGRVDLSRK (76 aa)).

The protein belongs to the polyribonucleotide nucleotidyltransferase family. Mg(2+) serves as cofactor.

It localises to the cytoplasm. It carries out the reaction RNA(n+1) + phosphate = RNA(n) + a ribonucleoside 5'-diphosphate. Functionally, involved in mRNA degradation. Catalyzes the phosphorolysis of single-stranded polyribonucleotides processively in the 3'- to 5'-direction. The polypeptide is Polyribonucleotide nucleotidyltransferase (Acholeplasma laidlawii (strain PG-8A)).